Here is a 312-residue protein sequence, read N- to C-terminus: MEIASQEDHDMPIPLNTTFGGGGSHGHMIHHHDHHAANSAPPTHNNNNTTQPPPMPLHGNGHGNNYDHHHHQDPHHVGYNAIIKKPMIKYKECLKNHAAAMGGNATDGCGEFMPSGEDGSIEALTCSACNCHRNFHRKEVEGELAATAMSPYHQHPPHRKLMLNHQKIRSAMPHQMIMPIGVSNYRYMHNNSESEDFMEEDGVTTASRSLPNLPYNQKKRFRTKFTPEQKEKMLSFAEKVGWKIQRQEDCVVQRFCEEIGVKRRVLKVWMHNNKIHFSKKNNINLEDNDNEKINNLNNVDLSGNNDMTKIVP.

The segment at 20–74 is disordered; sequence GGGGSHGHMIHHHDHHAANSAPPTHNNNNTTQPPPMPLHGNGHGNNYDHHHHQDP. The segment covering 37-50 has biased composition (low complexity); the sequence is ANSAPPTHNNNNTT. The ZF-HD dimerization-type; degenerate zinc-finger motif lies at 90 to 139; the sequence is YKECLKNHAAAMGGNATDGCGEFMPSGEDGSIEALTCSACNCHRNFHRKE. The segment at residues 218–281 is a DNA-binding region (homeobox); sequence KKRFRTKFTP…NNKIHFSKKN (64 aa).

As to quaternary structure, homo- and heterodimer with other ZFHD proteins. Interacts with ZHD1, ZHD2, ZHD5, ZHD7, ZHD8, ZHD10 and ZHD11. In terms of tissue distribution, mostly expressed in flowers and inflorescence.

It is found in the nucleus. Functionally, putative transcription factor. Probably involved in the regulation of floral induction. In Arabidopsis thaliana (Mouse-ear cress), this protein is Zinc-finger homeodomain protein 4 (ZHD4).